The following is a 166-amino-acid chain: Phospholipase A2 inhibitor clone 02/03/06/07 (166 aa).

The N-terminal stretch at 1–19 (MRLILLSGLLLLGTFLANG) is a signal peptide. The C-type lectin domain occupies 46–161 (LKHAFLTVHK…CDDNLLVVCE (116 aa)). Disulfide bonds link Cys83–Cys160 and Cys138–Cys152. The N-linked (GlcNAc...) asparagine glycan is linked to Asn122.

Belongs to the alpha-type phospholipase A2 inhibitor family. Homotrimer; non-covalently linked. In terms of tissue distribution, expressed by the liver.

The protein resides in the secreted. This phospholipase A2 inhibitor binds directly phospholipase A2 in the presence or absence of calcium. In Lachesis muta muta (Bushmaster), this protein is Phospholipase A2 inhibitor clone 02/03/06/07.